Reading from the N-terminus, the 435-residue chain is Salicylate hydroxylase (435 aa).

Position 12–41 (12–41) interacts with FAD; the sequence is RVAIVGGGISGLALALSLCKHSHLNVQLFE.

FAD is required as a cofactor.

It carries out the reaction salicylate + NADH + O2 + 2 H(+) = catechol + CO2 + NAD(+) + H2O. The protein operates within aromatic compound metabolism; naphthalene degradation. In Pseudomonas putida (Arthrobacter siderocapsulatus), this protein is Salicylate hydroxylase (nahG).